Consider the following 339-residue polypeptide: 2-halobenzoate 1,2-dioxygenase electron transfer component (339 aa).

The 2Fe-2S ferredoxin-type domain maps to 3–96; the sequence is HSIALRFEDD…DCVVRILASS (94 aa). Positions 40, 45, 48, and 80 each coordinate [2Fe-2S] cluster. The tract at residues 98 to 336 is ferredoxin-reductase; the sequence is ACQVKKSTMT…NFYFEKFAPT (239 aa). An FAD-binding FR-type domain is found at 103–203; the sequence is KSTMTGQMTE…DGPYGAFYLR (101 aa).

Belongs to the bacterial ring-hydroxylating dioxygenase ferredoxin reductase family. As to quaternary structure, monomer. It is part of 2-halobenzoate dioxygenase two component enzyme system. The other component is a dioxygenase component consisting of 3 large (CbdA) subunits and 3 small (CbdB) subunits. FAD serves as cofactor. Requires [2Fe-2S] cluster as cofactor.

It catalyses the reaction 2 reduced [2Fe-2S]-[ferredoxin] + NAD(+) + H(+) = 2 oxidized [2Fe-2S]-[ferredoxin] + NADH. It functions in the pathway xenobiotic degradation; benzoate degradation via CoA ligation. In terms of biological role, electron transfer component of 2-halobenzoate 1,2-dioxygenase system. This Burkholderia cepacia (Pseudomonas cepacia) protein is 2-halobenzoate 1,2-dioxygenase electron transfer component (cbdC).